An 818-amino-acid polypeptide reads, in one-letter code: Response regulator SSK1 (818 aa).

Residues 611 to 769 (NVLIVEDNPI…WLERKVMEWG (159 aa)) enclose the Response regulatory domain. Asp-660 carries the post-translational modification 4-aspartylphosphate.

This sequence belongs to the SSK1 family.

The protein resides in the cytoplasm. Its function is as follows. Two-domain response regulator protein in the two-component signal transduction system of the HOG1 pathway. Modulates stress response, melanin biosynthesis and virulence via its regulation of the phosphorylation of HOG1. This Verticillium dahliae (strain VdLs.17 / ATCC MYA-4575 / FGSC 10137) (Verticillium wilt) protein is Response regulator SSK1.